Here is a 201-residue protein sequence, read N- to C-terminus: Small ribosomal subunit protein uS4c (201 aa).

Residues 17–44 form a disordered region; it reads ALPGLTNKKPRNGSDLRNQSRSGKKSQY. The S4 RNA-binding domain occupies 89–149; sequence MRLDNILFRL…DEQKSRALIQ (61 aa).

It belongs to the universal ribosomal protein uS4 family. In terms of assembly, part of the 30S ribosomal subunit. Contacts protein S5. The interaction surface between S4 and S5 is involved in control of translational fidelity.

Its subcellular location is the plastid. It localises to the chloroplast. Functionally, one of the primary rRNA binding proteins, it binds directly to 16S rRNA where it nucleates assembly of the body of the 30S subunit. With S5 and S12 plays an important role in translational accuracy. The protein is Small ribosomal subunit protein uS4c (rps4) of Nicotiana sylvestris (Wood tobacco).